Reading from the N-terminus, the 474-residue chain is MSKKLHIKTWGCQMNEYDSSKMADLMDEYKGYTLTEEAEEADVLLLNTCSIREKAQEKVFHQLGRWKKLKDKNPNLIIGVGGCVASQEGKVIKDRAQCVDLIFGPQTLHRLPEMIDQIEAGGKAVIDVSFPEIEKFDRLPEPRADGPSAFVSIMEGCSKYCSFCVVPYTRGEEVSRPLDDVILEIAQLAEQGVREVNLLGQNVNAYRGATHDDEICTFAELLRYVAAIDGIDRLRFTTSHPIEFTQDIIDVYEDTPELVSFLHLPVQSGSDRILTQMKRGHMAIEYKSIIRRLRKARPDIQVSSDFIIGFPGESKQDFEDTMKLIEDVQFDHSFSFIYSARPGTPASDLPDDVTLDEKKERLAILQDRITQQAMRYSRQMLGTVQRILVEGPSVKNPMELRGRTETSRVVNFEADPKHIGSFVDVEIVDVYTNSLRGNFIRGEDEMDLRRSLRPSDILAKHKKDDELGVTQYIP.

The region spanning 3–120 is the MTTase N-terminal domain; that stretch reads KKLHIKTWGC…LPEMIDQIEA (118 aa). [4Fe-4S] cluster-binding residues include C12, C49, C83, C157, C161, and C164. In terms of domain architecture, Radical SAM core spans 143 to 375; it reads RADGPSAFVS…QDRITQQAMR (233 aa). The TRAM domain maps to 378–441; the sequence is RQMLGTVQRI…TNSLRGNFIR (64 aa).

This sequence belongs to the methylthiotransferase family. MiaB subfamily. In terms of assembly, monomer. Requires [4Fe-4S] cluster as cofactor.

It is found in the cytoplasm. It catalyses the reaction N(6)-dimethylallyladenosine(37) in tRNA + (sulfur carrier)-SH + AH2 + 2 S-adenosyl-L-methionine = 2-methylsulfanyl-N(6)-dimethylallyladenosine(37) in tRNA + (sulfur carrier)-H + 5'-deoxyadenosine + L-methionine + A + S-adenosyl-L-homocysteine + 2 H(+). In terms of biological role, catalyzes the methylthiolation of N6-(dimethylallyl)adenosine (i(6)A), leading to the formation of 2-methylthio-N6-(dimethylallyl)adenosine (ms(2)i(6)A) at position 37 in tRNAs that read codons beginning with uridine. The polypeptide is tRNA-2-methylthio-N(6)-dimethylallyladenosine synthase (Shewanella woodyi (strain ATCC 51908 / MS32)).